We begin with the raw amino-acid sequence, 192 residues long: Urease accessory protein UreE (192 aa).

The tract at residues 170–192 is disordered; it reads EHHGHSHSHSHDHVHDEKCGHKH. Over residues 178–192 the composition is skewed to basic and acidic residues; sequence HSHDHVHDEKCGHKH.

It belongs to the UreE family.

The protein localises to the cytoplasm. In terms of biological role, involved in urease metallocenter assembly. Binds nickel. Probably functions as a nickel donor during metallocenter assembly. In Cupriavidus necator (strain ATCC 17699 / DSM 428 / KCTC 22496 / NCIMB 10442 / H16 / Stanier 337) (Ralstonia eutropha), this protein is Urease accessory protein UreE.